Reading from the N-terminus, the 106-residue chain is PAT complex subunit Asterix (106 aa).

The segment covering 1 to 10 has biased composition (polar residues); sequence MSANSMSDPR. The disordered stretch occupies residues 1-29; that stretch reads MSANSMSDPRSPNKVLRYKPPPSECNPAL. Ser-2 bears the N-acetylserine mark. At 2-32 the chain is on the cytoplasmic side; that stretch reads SANSMSDPRSPNKVLRYKPPPSECNPALDDP. Residues 33–51 traverse the membrane as a helical segment; the sequence is TPDYMNLLGMIFSMCGLML. Residue Lys-52 is a topological domain, lumenal. Residues 53 to 70 form a helical membrane-spanning segment; the sequence is LKWCAWVAVYCSFISFAN. Residues 71-74 lie on the Cytoplasmic side of the membrane; sequence SRSS. A helical transmembrane segment spans residues 75–95; sequence EDTKQMMSSFMLSISAVVMSY. Residues 96-106 lie on the Lumenal side of the membrane; that stretch reads LQNPQPMTPPW.

It belongs to the Asterix family. Component of the PAT complex, composed of WDR83OS/Asterix and CCDC47. The PAT complex is part of the multi-pass translocon (MPT) complex, composed of three subcomplexes, the GEL complex (composed of RAB5IF/OPTI and TMCO1), the BOS complex (composed of NCLN/Nicalin, NOMO1 and TMEM147) and the PAT complex (composed of WDR83OS/Asterix and CCDC47). The MPT complex associates with the SEC61 complex.

Its subcellular location is the endoplasmic reticulum membrane. In terms of biological role, component of the multi-pass translocon (MPT) complex that mediates insertion of multi-pass membrane proteins into the lipid bilayer of membranes. The MPT complex takes over after the SEC61 complex: following membrane insertion of the first few transmembrane segments of proteins by the SEC61 complex, the MPT complex occludes the lateral gate of the SEC61 complex to promote insertion of subsequent transmembrane regions. Within the MPT complex, the PAT subcomplex sequesters any highly polar regions in the transmembrane domains away from the non-polar membrane environment until they can be buried in the interior of the fully assembled protein. Within the PAT subcomplex, WDR83OS/Asterix binds to and redirects the substrate to a location behind the SEC61 complex. The sequence is that of PAT complex subunit Asterix (WDR83OS) from Sus scrofa (Pig).